The following is a 98-amino-acid chain: Keratin-associated protein 3-3 (98 aa).

Tandem repeats lie at residues 3 to 7 (CCASR), 47 to 51 (CCDNC), and 89 to 93 (CCEPC). The tract at residues 3–59 (CCASRGCSVPTGPATTICSSDKSCRCGVCLPSTCPHTVWLLEPTCCDNCPPPCHIPQ) is 3 X 5 AA repeats of C-C-X(3).

This sequence belongs to the KRTAP type 3 family. Interacts with hair keratins. In terms of tissue distribution, localized to the upper cortex of the hair shaft.

Its function is as follows. In the hair cortex, hair keratin intermediate filaments are embedded in an interfilamentous matrix, consisting of hair keratin-associated proteins (KRTAP), which are essential for the formation of a rigid and resistant hair shaft through their extensive disulfide bond cross-linking with abundant cysteine residues of hair keratins. The matrix proteins include the high-sulfur and high-glycine-tyrosine keratins. The sequence is that of Keratin-associated protein 3-3 (KRTAP3-3) from Homo sapiens (Human).